We begin with the raw amino-acid sequence, 375 residues long: Homoserine O-succinyltransferase (375 aa).

Positions 48-358 (NAVLVCHALS…PAGHDSFLLD (311 aa)) constitute an AB hydrolase-1 domain. Ser154 functions as the Nucleophile in the catalytic mechanism. Arg224 contacts substrate. Active-site residues include Asp319 and His352. Substrate is bound at residue Asp353.

Belongs to the AB hydrolase superfamily. MetX family. As to quaternary structure, homodimer.

The protein resides in the cytoplasm. The catalysed reaction is L-homoserine + succinyl-CoA = O-succinyl-L-homoserine + CoA. The protein operates within amino-acid biosynthesis; L-methionine biosynthesis via de novo pathway; O-succinyl-L-homoserine from L-homoserine: step 1/1. Transfers a succinyl group from succinyl-CoA to L-homoserine, forming succinyl-L-homoserine. This chain is Homoserine O-succinyltransferase, found in Azoarcus sp. (strain BH72).